A 441-amino-acid chain; its full sequence is Serine carboxypeptidase-like 3 (441 aa).

The N-terminal stretch at 1 to 30 (MASNYVFSVLRSLLLLIHTVFLGQHHVSSA) is a signal peptide. 3 cysteine pairs are disulfide-bonded: cysteine 88/cysteine 331, cysteine 252/cysteine 266, and cysteine 290/cysteine 297. Asparagine 109 carries an N-linked (GlcNAc...) asparagine glycan. The active site involves serine 184. An N-linked (GlcNAc...) asparagine glycan is attached at asparagine 350. The active site involves aspartate 366. N-linked (GlcNAc...) asparagine glycosylation is present at asparagine 382. Residue histidine 419 is part of the active site.

This sequence belongs to the peptidase S10 family. As to expression, expressed in roots.

It is found in the secreted. Functionally, probable carboxypeptidase. This Arabidopsis thaliana (Mouse-ear cress) protein is Serine carboxypeptidase-like 3 (SCPL3).